Here is a 140-residue protein sequence, read N- to C-terminus: L-fucose mutarotase (140 aa).

The Proton donor role is filled by His-22. Substrate contacts are provided by residues Asp-30, Arg-107, and 129–131 (YGN).

Belongs to the RbsD / FucU family. FucU mutarotase subfamily. In terms of assembly, homodecamer.

Its subcellular location is the cytoplasm. It catalyses the reaction alpha-L-fucose = beta-L-fucose. It functions in the pathway carbohydrate metabolism; L-fucose metabolism. Involved in the anomeric conversion of L-fucose. The polypeptide is L-fucose mutarotase (Shigella boydii serotype 18 (strain CDC 3083-94 / BS512)).